Consider the following 138-residue polypeptide: MNIIDHFEQENISKLTANKKIPDFEAGDTVKVTVKIIDRSIEKDGKEKLTERFQAYEGVVIAKRNRGITSSFLVRKISHGEGVERRFMTYSPIVHSIDVVKYGVVRRAKLYYLRQRSGKSARIKERHIPIAKTKAAKA.

It belongs to the bacterial ribosomal protein bL19 family.

In terms of biological role, this protein is located at the 30S-50S ribosomal subunit interface and may play a role in the structure and function of the aminoacyl-tRNA binding site. The chain is Large ribosomal subunit protein bL19 from Rickettsia felis (strain ATCC VR-1525 / URRWXCal2) (Rickettsia azadi).